Reading from the N-terminus, the 72-residue chain is Delta-actitoxin-Avd2b 3 (72 aa).

An N-terminal signal peptide occupies residues 1 to 21 (MMSRLLVFLMLGAAFMLVVSA). Residues 22–42 (NDAYGDEPAFKDLNQGDESLG) constitute a propeptide that is removed on maturation. 3 disulfide bridges follow: Cys-47/Cys-62, Cys-48/Cys-56, and Cys-50/Cys-67.

Belongs to the sea anemone short toxin (type III) family.

The protein localises to the secreted. It localises to the nematocyst. Voltage-gated sodium channel (Nav) inhibitor. 1 uM completely inhibits insect voltage-gated sodium channel inactivation (DmNav1 from D.melanogaster). The sequence is that of Delta-actitoxin-Avd2b 3 from Anemonia viridis (Snakelocks anemone).